Reading from the N-terminus, the 467-residue chain is MGRRAPRGSPEAAPGADVAPGARAAWWVWCVQVATFIVSAICVVGLLVLASVFRDRFPCLYAPATSYAKANATVEVRGGVAVPLRLDTQSLLATYAITSTLLLAAAVYAAVGAVTSRYERALDAARRLAAARMAMPHATLIAGNVCAWLLQITVLLLAHRISQLAHLIYVLHFACLVYLAAHFCTRGVLSGTYLRQVHGLIDPAPTHHRIVGPVRAVMTNALLLGTLLCTAAAAVSLNTIAALNFNFSAPSMLICLTTLFALLVVSLLLVVEGVLCHYVRVLVGPHLGAIAATGIVGLACEHYHTGGYYVVEQQWPGAQTGVRVALALVAAFALAMAVLRCTRAYLYHRRHHTKFFVRMRDTRHRAHSALRRVRSSMRGSRRGGPPGDPGYAETPYASVSHHAEIDRYGDSDGDPIYDEVAPDHEAELYARVQRPGPVPDAEPIYDTVEGYAPRSAGEPVYSTVRRW.

Topologically, residues 1 to 32 are intravirion; the sequence is MGRRAPRGSPEAAPGADVAPGARAAWWVWCVQ. The chain crosses the membrane as a helical span at residues 33–53; sequence VATFIVSAICVVGLLVLASVF. The Virion surface segment spans residues 54–90; the sequence is RDRFPCLYAPATSYAKANATVEVRGGVAVPLRLDTQS. A helical transmembrane segment spans residues 91–111; that stretch reads LLATYAITSTLLLAAAVYAAV. Residues 112–137 are Intravirion-facing; sequence GAVTSRYERALDAARRLAAARMAMPH. The helical transmembrane segment at 138 to 158 threads the bilayer; that stretch reads ATLIAGNVCAWLLQITVLLLA. Residues 159–163 lie on the Virion surface side of the membrane; it reads HRISQ. A helical membrane pass occupies residues 164 to 184; the sequence is LAHLIYVLHFACLVYLAAHFC. Residues 185-220 are Intravirion-facing; it reads TRGVLSGTYLRQVHGLIDPAPTHHRIVGPVRAVMTN. The chain crosses the membrane as a helical span at residues 221–241; that stretch reads ALLLGTLLCTAAAAVSLNTIA. Residues 242–250 lie on the Virion surface side of the membrane; sequence ALNFNFSAP. A helical transmembrane segment spans residues 251-271; it reads SMLICLTTLFALLVVSLLLVV. Topologically, residues 272 to 280 are intravirion; sequence EGVLCHYVR. A helical membrane pass occupies residues 281 to 301; it reads VLVGPHLGAIAATGIVGLACE. Topologically, residues 302 to 318 are virion surface; that stretch reads HYHTGGYYVVEQQWPGA. A helical transmembrane segment spans residues 319–339; the sequence is QTGVRVALALVAAFALAMAVL. Topologically, residues 340–467 are intravirion; it reads RCTRAYLYHR…EPVYSTVRRW (128 aa). Basic residues predominate over residues 371-381; that stretch reads RRVRSSMRGSR. 2 disordered regions span residues 371-395 and 432-459; these read RRVR…AETP and VQRP…AGEP.

Belongs to the herpesviridae glycoprotein M family. As to quaternary structure, interacts (via N-terminus) with gN (via N-terminus). The gM-gN heterodimer forms the gCII complex.

Its subcellular location is the virion membrane. It is found in the host Golgi apparatus. It localises to the host trans-Golgi network. The protein resides in the host endosome membrane. The protein localises to the host nucleus inner membrane. Functionally, envelope glycoprotein important for virion assembly and egress. Plays a role in the correct incorporation of gH-gL into virion membrane. Directs the glycoprotein N (gN) to the host trans-Golgi network. The sequence is that of Envelope glycoprotein M from Human herpesvirus 2 (strain HG52) (HHV-2).